The following is a 211-amino-acid chain: Cytidylate kinase (211 aa).

ATP is bound at residue 7-15; that stretch reads GPAASGKGT.

The protein belongs to the cytidylate kinase family. Type 1 subfamily.

It is found in the cytoplasm. The enzyme catalyses CMP + ATP = CDP + ADP. It catalyses the reaction dCMP + ATP = dCDP + ADP. The sequence is that of Cytidylate kinase from Rhodopseudomonas palustris (strain BisA53).